A 471-amino-acid chain; its full sequence is 3-isopropylmalate dehydratase large subunit (471 aa).

[4Fe-4S] cluster contacts are provided by Cys-347, Cys-407, and Cys-410. Residues 417-443 (TLQPGERSASTSNRNFEGRQGKGGRTH) form a disordered region.

The protein belongs to the aconitase/IPM isomerase family. LeuC type 1 subfamily. In terms of assembly, heterodimer of LeuC and LeuD. The cofactor is [4Fe-4S] cluster.

It carries out the reaction (2R,3S)-3-isopropylmalate = (2S)-2-isopropylmalate. It participates in amino-acid biosynthesis; L-leucine biosynthesis; L-leucine from 3-methyl-2-oxobutanoate: step 2/4. In terms of biological role, catalyzes the isomerization between 2-isopropylmalate and 3-isopropylmalate, via the formation of 2-isopropylmaleate. In Nocardioides sp. (strain ATCC BAA-499 / JS614), this protein is 3-isopropylmalate dehydratase large subunit.